We begin with the raw amino-acid sequence, 591 residues long: Proteasome-associated ATPase (591 aa).

A coiled-coil region spans residues 8 to 77; it reads DSVAAARELE…LREEVDRLGQ (70 aa). Residue 278–283 participates in ATP binding; that stretch reads GCGKTL. Positions 590–591 are docks into pockets in the proteasome alpha-ring; that stretch reads YL.

The protein belongs to the AAA ATPase family. In terms of assembly, homohexamer. Assembles into a hexameric ring structure that caps the 20S proteasome core. Strongly interacts with the prokaryotic ubiquitin-like protein Pup through a hydrophobic interface; the interacting region of ARC lies in its N-terminal coiled-coil domain. There is one Pup binding site per ARC hexamer ring. Upon ATP-binding, the C-terminus of ARC interacts with the alpha-rings of the proteasome core, possibly by binding to the intersubunit pockets.

It functions in the pathway protein degradation; proteasomal Pup-dependent pathway. Functionally, ATPase which is responsible for recognizing, binding, unfolding and translocation of pupylated proteins into the bacterial 20S proteasome core particle. May be essential for opening the gate of the 20S proteasome via an interaction with its C-terminus, thereby allowing substrate entry and access to the site of proteolysis. Thus, the C-termini of the proteasomal ATPase may function like a 'key in a lock' to induce gate opening and therefore regulate proteolysis. The polypeptide is Proteasome-associated ATPase (Rhodococcus jostii (strain RHA1)).